The primary structure comprises 443 residues: Transcriptional adapter 2-alpha (443 aa).

Ser-6 bears the Phosphoserine mark. The ZZ-type zinc-finger motif lies at 12–69; the sequence is SDKPPCRGCSSYLMEPYIKCAECGPPPFFLCLQCFTRGFEYKKHQSDHTYEIMTSDFP. Zn(2+) contacts are provided by Cys-17, Cys-20, Cys-31, Cys-34, Cys-42, Cys-45, His-55, and His-59. The SANT domain occupies 70 to 122; that stretch reads VLDPSWTAQEEMALLEAVMDCGFGNWQDVANQMCTKTKEECEKHYMKHFINNP. Residues Lys-132 and Lys-138 each participate in a glycyl lysine isopeptide (Lys-Gly) (interchain with G-Cter in SUMO2) cross-link. The span at 347–359 shows a compositional bias: polar residues; it reads LSPSVPMTSNSGR. The segment at 347 to 372 is disordered; it reads LSPSVPMTSNSGRRSAPPLNLTGLPG. The 88-residue stretch at 356 to 443 folds into the SWIRM domain; the sequence is NSGRRSAPPL…LIREGYITKA (88 aa). The DNA-binding element occupies 426-435; the sequence is KTRKIYDFLI.

As to quaternary structure, interacts with GCN5 and NR3C1. Associated with the P/CAF protein in the PCAF complex. Component of the PCAF complex, at least composed of TADA2L/ADA2, TADA3L/ADA3, TAF5L/PAF65-beta, TAF6L/PAF65-alpha, TAF10/TAFII30, TAF12/TAFII20, TAF9/TAFII31 and TRRAP. Component of the ADA2A-containing complex (ATAC), composed of KAT14, KAT2A, TADA2L, TADA3L, ZZ3, MBIP, WDR5, YEATS2, CCDC101 and DR1. Interacts with CCDC134.

Its subcellular location is the nucleus. The protein resides in the chromosome. In terms of biological role, component of the ATAC complex, a complex with histone acetyltransferase activity on histones H3 and H4. Required for the function of some acidic activation domains, which activate transcription from a distant site. Binds double-stranded DNA. Binds dinucleosomes, probably at the linker region between neighboring nucleosomes. Plays a role in chromatin remodeling. May promote TP53/p53 'Lys-321' acetylation, leading to reduced TP53 stability and transcriptional activity. May also promote XRCC6 acetylation thus facilitating cell apoptosis in response to DNA damage. The chain is Transcriptional adapter 2-alpha (TADA2A) from Bos taurus (Bovine).